The chain runs to 196 residues: Peptidyl-tRNA hydrolase (196 aa).

TRNA is bound at residue Tyr18. His23 (proton acceptor) is an active-site residue. TRNA-binding residues include Phe69, Asn71, and Asn117.

The protein belongs to the PTH family. As to quaternary structure, monomer.

It localises to the cytoplasm. It carries out the reaction an N-acyl-L-alpha-aminoacyl-tRNA + H2O = an N-acyl-L-amino acid + a tRNA + H(+). Hydrolyzes ribosome-free peptidyl-tRNAs (with 1 or more amino acids incorporated), which drop off the ribosome during protein synthesis, or as a result of ribosome stalling. In terms of biological role, catalyzes the release of premature peptidyl moieties from peptidyl-tRNA molecules trapped in stalled 50S ribosomal subunits, and thus maintains levels of free tRNAs and 50S ribosomes. In Marinobacter nauticus (strain ATCC 700491 / DSM 11845 / VT8) (Marinobacter aquaeolei), this protein is Peptidyl-tRNA hydrolase.